The primary structure comprises 212 residues: Peroxisomal membrane protein 4 (212 aa).

2 consecutive transmembrane segments (helical) span residues 97–117 (GGTHQMHSFLAAFIGGLLLFG) and 151–171 (LKWDPFPLHTAVIWGLVLWLF). A glycan (N-linked (GlcNAc...) asparagine) is linked at N206.

Belongs to the peroxisomal membrane protein PXMP2/4 family. As to quaternary structure, interacts with PEX19. Liver.

It localises to the peroxisome membrane. This is Peroxisomal membrane protein 4 (Pxmp4) from Rattus norvegicus (Rat).